We begin with the raw amino-acid sequence, 384 residues long: MNAPTPAPSPVDVIPAPVGLLAELTHRCPLRCPYCSNPLELDRRSAELDTQTWLRVLTEAAGLGVLHVHLSGGEPTARPDIVEITAKCAELGLYSNLITSGVGGALAKLDALYDVGLDHVQLSVQGVDAANAEKIGGLKNAQPQKMQFAARVTELGLPLTLNSVIHRGNIHEVPGFIDLAVKLGAKRLEVAHTQYYGWAYVNRAALMPDKSQVDESIRIVEAARERLKGQLVIDLVVPDYYAKYPKACAGGWGRKLMNVTPQGKVLPCHAAETIPGLEFWYVTDHSLGEIWTQSPAFAAYRGTSWMKEPCRSCDRREKDWGGCRCQALALTGDAANTDPACSLSPLHAKMRDLAKEEAAETPPDYIYRSIGTNVQNPLSEKAPL.

One can recognise a Radical SAM core domain in the interval 14–230; the sequence is IPAPVGLLAE…EAARERLKGQ (217 aa). Positions 28, 32, and 35 each coordinate [4Fe-4S] cluster.

This sequence belongs to the radical SAM superfamily. PqqE family. In terms of assembly, interacts with PqqD. The interaction is necessary for activity of PqqE. [4Fe-4S] cluster is required as a cofactor.

It carries out the reaction [PQQ precursor protein] + S-adenosyl-L-methionine = E-Y cross-linked-[PQQ precursor protein] + 5'-deoxyadenosine + L-methionine + H(+). It functions in the pathway cofactor biosynthesis; pyrroloquinoline quinone biosynthesis. Its function is as follows. Catalyzes the cross-linking of a glutamate residue and a tyrosine residue in the PqqA protein as part of the biosynthesis of pyrroloquinoline quinone (PQQ). The chain is PqqA peptide cyclase from Methylorubrum extorquens (strain CM4 / NCIMB 13688) (Methylobacterium extorquens).